The following is a 360-amino-acid chain: Peptide chain release factor 1 (360 aa).

An N5-methylglutamine modification is found at Gln233. Residues 283 to 305 (KLDAERAADRRSQVGSGDRSERI) form a disordered region.

It belongs to the prokaryotic/mitochondrial release factor family. Methylated by PrmC. Methylation increases the termination efficiency of RF1.

The protein localises to the cytoplasm. Its function is as follows. Peptide chain release factor 1 directs the termination of translation in response to the peptide chain termination codons UAG and UAA. The protein is Peptide chain release factor 1 of Methylocella silvestris (strain DSM 15510 / CIP 108128 / LMG 27833 / NCIMB 13906 / BL2).